A 3391-amino-acid polypeptide reads, in one-letter code: Genome polyprotein (3391 aa).

Positions methionine 1–methionine 15 are interaction with host EXOC1. Residues methionine 1–serine 101 lie on the Cytoplasmic side of the membrane. Residues methionine 37–isoleucine 72 form a hydrophobic; homodimerization of capsid protein C region. Positions serine 101 to alanine 114 are cleaved as a propeptide — ER anchor for the Capsid protein C, removed in mature form by serine protease NS3. Positions serine 101–alanine 114 are cleaved as a propeptide — ER anchor for the capsid protein C, removed in mature form by serine protease NS3. A helical transmembrane segment spans residues alanine 102–glycine 122. Topologically, residues glutamate 123–leucine 242 are extracellular. N-linked (GlcNAc...) asparagine; by host glycosylation is present at asparagine 183. The helical transmembrane segment at arginine 243 to threonine 260 threads the bilayer. Residue threonine 261 is a topological domain, cytoplasmic. The helical transmembrane segment at histidine 262–threonine 280 threads the bilayer. Residues methionine 281–alanine 727 are Extracellular-facing. Intrachain disulfides connect cysteine 283–cysteine 310, cysteine 340–cysteine 401, cysteine 354–cysteine 385, and cysteine 372–cysteine 396. A glycan (N-linked (GlcNAc...) asparagine; by host) is linked at asparagine 347. Residues aspartate 378–glycine 391 form a fusion peptide region. A glycan (N-linked (GlcNAc...) asparagine; by host) is linked at asparagine 433. 2 disulfides stabilise this stretch: cysteine 465/cysteine 565 and cysteine 582/cysteine 613. The helical transmembrane segment at phenylalanine 728–methionine 748 threads the bilayer. Over asparagine 749–serine 752 the chain is Cytoplasmic. Residues threonine 753–valine 773 form a helical membrane-spanning segment. Over glutamine 774–isoleucine 1195 the chain is Extracellular. Cystine bridges form between cysteine 779/cysteine 790, cysteine 830/cysteine 918, cysteine 954/cysteine 998, cysteine 1055/cysteine 1104, cysteine 1066/cysteine 1088, and cysteine 1087/cysteine 1091. N-linked (GlcNAc...) asparagine; by host glycans are attached at residues asparagine 905 and asparagine 982. Residue asparagine 1134 is glycosylated (N-linked (GlcNAc...) asparagine; by host). Residues glycine 1196–leucine 1220 form a helical membrane-spanning segment. Residues arginine 1221 to lysine 1226 lie on the Cytoplasmic side of the membrane. Residues glutamate 1227 to glutamate 1245 form a helical membrane-spanning segment. Residues threonine 1246 to lysine 1269 lie on the Lumenal side of the membrane. The helical transmembrane segment at tyrosine 1270–asparagine 1290 threads the bilayer. Position 1291 (alanine 1291) is a topological domain, cytoplasmic. Residues tryptophan 1292–threonine 1310 form a helical membrane-spanning segment. At serine 1311–aspartate 1317 the chain is on the lumenal side. Residues tryptophan 1318–leucine 1338 form a helical membrane-spanning segment. At serine 1339–serine 1346 the chain is on the cytoplasmic side. The helical transmembrane segment at tryptophan 1347–leucine 1367 threads the bilayer. Residues lysine 1368 to aspartate 1370 are Lumenal-facing. Residues isoleucine 1371–glycine 1391 form a helical membrane-spanning segment. The Cytoplasmic segment spans residues arginine 1392 to glycine 1447. The segment at leucine 1398 to glutamate 1437 is interacts with and activates NS3 protease. Residues leucine 1448–leucine 1468 constitute an intramembrane region (helical). Over tryptophan 1469–threonine 2147 the chain is Cytoplasmic. The region spanning alanine 1476–isoleucine 1653 is the Peptidase S7 domain. Catalysis depends on charge relay system; for serine protease NS3 activity residues histidine 1526, aspartate 1550, and serine 1610. The region spanning aspartate 1655–glutamate 1811 is the Helicase ATP-binding domain. The interval arginine 1659–arginine 1662 is important for RNA-binding. Residue leucine 1668–threonine 1675 participates in ATP binding. The DEAH box motif lies at aspartate 1759 to histidine 1762. The 168-residue stretch at serine 1821–arginine 1988 folds into the Helicase C-terminal domain. Lysine 1863 is modified (N6-acetyllysine; by host). A helical transmembrane segment spans residues leucine 2148–alanine 2168. The Lumenal portion of the chain corresponds to arginine 2169 to glycine 2170. The segment at residues isoleucine 2171–alanine 2191 is an intramembrane region (helical). Residue glutamine 2192 is a topological domain, lumenal. The chain crosses the membrane as a helical span at residues isoleucine 2193–isoleucine 2213. Residues proline 2214–threonine 2228 lie on the Cytoplasmic side of the membrane. Residues tyrosine 2229–leucine 2249 form a helical membrane-spanning segment. Over glutamate 2250–aspartate 2274 the chain is Lumenal. Residues leucine 2275–leucine 2295 constitute an intramembrane region (helical). Over arginine 2296–threonine 2316 the chain is Lumenal. 2 N-linked (GlcNAc...) asparagine; by host glycosylation sites follow: asparagine 2301 and asparagine 2305. Positions valine 2317–leucine 2337 form an intramembrane region, helical. The Lumenal portion of the chain corresponds to alanine 2338–proline 2347. A helical membrane pass occupies residues threonine 2348–leucine 2368. Residues glutamine 2369–glutamine 2413 are Cytoplasmic-facing. The helical transmembrane segment at valine 2414–cysteine 2434 threads the bilayer. Over glutamate 2435 to threonine 2459 the chain is Lumenal. The N-linked (GlcNAc...) asparagine; by host glycan is linked to asparagine 2457. The chain crosses the membrane as a helical span at residues isoleucine 2460–phenylalanine 2480. The Cytoplasmic segment spans residues serine 2481–tryptophan 3391. The 263-residue stretch at threonine 2493–asparagine 2755 folds into the mRNA cap 0-1 NS5-type MT domain. Serine 2547 contacts S-adenosyl-L-methionine. At serine 2547 the chain carries Phosphoserine. Lysine 2552 (for 2'-O-MTase activity) is an active-site residue. Positions valine 2568–leucine 2571 match the SUMO-interacting motif motif. Positions 2577, 2578, 2595, 2596, 2622, and 2623 each coordinate S-adenosyl-L-methionine. Residue aspartate 2637 is the For 2'-O-MTase activity of the active site. Isoleucine 2638 serves as a coordination point for S-adenosyl-L-methionine. Active-site for 2'-O-MTase activity residues include lysine 2672 and glutamate 2708. Tyrosine 2710 provides a ligand contact to S-adenosyl-L-methionine. The Zn(2+) site is built by glutamate 2929, histidine 2933, cysteine 2938, and cysteine 2941. Residues alanine 3020 to leucine 3169 enclose the RdRp catalytic domain. 3 residues coordinate Zn(2+): histidine 3203, cysteine 3219, and cysteine 3338.

The protein in the N-terminal section; belongs to the class I-like SAM-binding methyltransferase superfamily. mRNA cap 0-1 NS5-type methyltransferase family. As to quaternary structure, homodimer. Interacts (via N-terminus) with host EXOC1 (via C-terminus); this interaction results in EXOC1 degradation through the proteasome degradation pathway. In terms of assembly, forms heterodimers with envelope protein E in the endoplasmic reticulum and Golgi. Homodimer; in the endoplasmic reticulum and Golgi. Interacts with protein prM. Interacts with non-structural protein 1. As to quaternary structure, homodimer; Homohexamer when secreted. Interacts with envelope protein E. Interacts with host PRKAA1. In terms of assembly, interacts (via N-terminus) with serine protease NS3. Forms a heterodimer with serine protease NS3. May form homooligomers. As to quaternary structure, forms a heterodimer with NS2B. Interacts with NS4B. Interacts with unphosphorylated RNA-directed RNA polymerase NS5; this interaction stimulates RNA-directed RNA polymerase NS5 guanylyltransferase activity. Interacts with host SHFL. In terms of assembly, interacts with host MAVS; this interaction inhibits the synthesis of IFN-beta. Interacts with host SHFL. Interacts with host AUP1; the interaction occurs in the presence of Dengue virus NS4B and induces lipophagy which facilitates production of virus progeny particles. May interact with host SRPRA and SEC61G. Interacts with serine protease NS3. As to quaternary structure, homodimer. Interacts with host STAT2; this interaction inhibits the phosphorylation of the latter, and, when all viral proteins are present (polyprotein), targets STAT2 for degradation. Interacts with serine protease NS3. Interacts with host PAF1 complex; the interaction may prevent the recruitment of the PAF1 complex to interferon-responsive genes, and thus reduces the immune response. Post-translationally, specific enzymatic cleavages in vivo yield mature proteins. Cleavages in the lumen of endoplasmic reticulum are performed by host signal peptidase, whereas cleavages in the cytoplasmic side are performed by serine protease NS3. Signal cleavage at the 2K-4B site requires a prior NS3 protease-mediated cleavage at the 4A-2K site. In terms of processing, cleaved in post-Golgi vesicles by a host furin, releasing the mature small envelope protein M, and peptide pr. This cleavage is incomplete as up to 30% of viral particles still carry uncleaved prM. N-glycosylated. Post-translationally, N-glycosylated. The excreted form is glycosylated and this is required for efficient secretion of the protein from infected cells. In terms of processing, acetylated by host KAT5. Acetylation modulates NS3 RNA-binding and unwinding activities and plays an important positive role for viral replication. Sumoylation of RNA-directed RNA polymerase NS5 increases NS5 protein stability allowing proper viral RNA replication. Post-translationally, phosphorylated on serines residues. This phosphorylation may trigger NS5 nuclear localization.

Its subcellular location is the virion. It localises to the host nucleus. It is found in the host cytoplasm. The protein localises to the host perinuclear region. The protein resides in the secreted. Its subcellular location is the virion membrane. It localises to the host endoplasmic reticulum membrane. It is found in the host mitochondrion. The enzyme catalyses Selective hydrolysis of -Xaa-Xaa-|-Yaa- bonds in which each of the Xaa can be either Arg or Lys and Yaa can be either Ser or Ala.. The catalysed reaction is RNA(n) + a ribonucleoside 5'-triphosphate = RNA(n+1) + diphosphate. It catalyses the reaction a ribonucleoside 5'-triphosphate + H2O = a ribonucleoside 5'-diphosphate + phosphate + H(+). It carries out the reaction ATP + H2O = ADP + phosphate + H(+). The enzyme catalyses a 5'-end (5'-triphosphoguanosine)-ribonucleoside in mRNA + S-adenosyl-L-methionine = a 5'-end (N(7)-methyl 5'-triphosphoguanosine)-ribonucleoside in mRNA + S-adenosyl-L-homocysteine. The catalysed reaction is a 5'-end (N(7)-methyl 5'-triphosphoguanosine)-ribonucleoside in mRNA + S-adenosyl-L-methionine = a 5'-end (N(7)-methyl 5'-triphosphoguanosine)-(2'-O-methyl-ribonucleoside) in mRNA + S-adenosyl-L-homocysteine + H(+). Functionally, plays a role in virus budding by binding to the cell membrane and gathering the viral RNA into a nucleocapsid that forms the core of a mature virus particle. During virus entry, may induce genome penetration into the host cytoplasm after hemifusion induced by the surface proteins. Can migrate to the cell nucleus where it modulates host functions. Overcomes the anti-viral effects of host EXOC1 by sequestering and degrading the latter through the proteasome degradation pathway. In terms of biological role, inhibits RNA silencing by interfering with host Dicer. Its function is as follows. Prevents premature fusion activity of envelope proteins in trans-Golgi by binding to envelope protein E at pH6.0. After virion release in extracellular space, gets dissociated from E dimers. Acts as a chaperone for envelope protein E during intracellular virion assembly by masking and inactivating envelope protein E fusion peptide. prM is the only viral peptide matured by host furin in the trans-Golgi network probably to avoid catastrophic activation of the viral fusion activity in acidic Golgi compartment prior to virion release. prM-E cleavage is inefficient, and many virions are only partially matured. These uncleaved prM would play a role in immune evasion. Functionally, may play a role in virus budding. Exerts cytotoxic effects by activating a mitochondrial apoptotic pathway through M ectodomain. May display a viroporin activity. In terms of biological role, binds to host cell surface receptor and mediates fusion between viral and cellular membranes. Envelope protein is synthesized in the endoplasmic reticulum in the form of heterodimer with protein prM. They play a role in virion budding in the ER, and the newly formed immature particle is covered with 60 spikes composed of heterodimer between precursor prM and envelope protein E. The virion is transported to the Golgi apparatus where the low pH causes dissociation of PrM-E heterodimers and formation of E homodimers. prM-E cleavage is inefficient, and many virions are only partially matured. These uncleaved prM would play a role in immune evasion. Its function is as follows. Involved in immune evasion, pathogenesis and viral replication. Once cleaved off the polyprotein, is targeted to three destinations: the viral replication cycle, the plasma membrane and the extracellular compartment. Essential for viral replication. Required for formation of the replication complex and recruitment of other non-structural proteins to the ER-derived membrane structures. Excreted as a hexameric lipoparticle that plays a role against host immune response. Antagonizing the complement function. Binds to the host macrophages and dendritic cells. Inhibits signal transduction originating from Toll-like receptor 3 (TLR3). Mediates complement activation, which may contribute to the pathogenesis of the vascular leakage that occurs in severe dengue disease. Activates autophagy through the AMPK/ERK/mTOR signaling pathway. Mechanistically, acts as the assembly platform for STK11-AMPK interactions and promotes STK11-AMPK interactions. In turn, promotes phosphorylation of the AMPK kinase structural domain and activates AMPK, thereby positively regulating the AMPK/ERK/mTOR signaling pathway and inducing autophagy. Disrupts the host endothelial glycocalyx layer of host pulmonary microvascular endothelial cells, inducing degradation of sialic acid and shedding of heparan sulfate proteoglycans. NS1 induces expression of sialidases, heparanase, and activates cathepsin L, which activates heparanase via enzymatic cleavage. These effects are probably linked to the endothelial hyperpermeability observed in severe dengue disease. Functionally, component of the viral RNA replication complex that functions in virion assembly and antagonizes the host immune response. In terms of biological role, required cofactor for the serine protease function of NS3. May have membrane-destabilizing activity and form viroporins. Its function is as follows. Displays three enzymatic activities: serine protease, NTPase and RNA helicase. NS3 serine protease, in association with NS2B, performs its autocleavage and cleaves the polyprotein at dibasic sites in the cytoplasm: C-prM, NS2A-NS2B, NS2B-NS3, NS3-NS4A, NS4A-2K and NS4B-NS5. NS3 RNA helicase binds RNA and unwinds dsRNA in the 3' to 5' direction. Regulates the ATPase activity of the NS3 helicase activity. NS4A allows NS3 helicase to conserve energy during unwinding. Plays a role in the inhibition of the host innate immune response. Interacts with host MAVS and thereby prevents the interaction between RIGI and MAVS. In turn, IFN-beta production is impaired. Interacts with host AUP1 which mediates induction of lipophagy in host cells and facilitates production of virus progeny particles. Functionally, functions as a signal peptide for NS4B and is required for the interferon antagonism activity of the latter. In terms of biological role, induces the formation of ER-derived membrane vesicles where the viral replication takes place. Inhibits interferon (IFN)-induced host STAT1 phosphorylation and nuclear translocation, thereby preventing the establishment of cellular antiviral state by blocking the IFN-alpha/beta pathway. Its function is as follows. Replicates the viral (+) and (-) RNA genome, and performs the capping of genomes in the cytoplasm. NS5 methylates viral RNA cap at guanine N-7 and ribose 2'-O positions. Besides its role in RNA genome replication, also prevents the establishment of cellular antiviral state by blocking the interferon-alpha/beta (IFN-alpha/beta) signaling pathway. Inhibits host TYK2 and STAT2 phosphorylation, thereby preventing activation of JAK-STAT signaling pathway. May reduce immune responses by preventing the recruitment of the host PAF1 complex to interferon-responsive genes. This is Genome polyprotein from Dengue virus type 2 (strain 16681-PDK53) (DENV-2).